Consider the following 335-residue polypeptide: Phosphate acyltransferase (335 aa).

This sequence belongs to the PlsX family. As to quaternary structure, homodimer. Probably interacts with PlsY.

The protein localises to the cytoplasm. It carries out the reaction a fatty acyl-[ACP] + phosphate = an acyl phosphate + holo-[ACP]. It participates in lipid metabolism; phospholipid metabolism. In terms of biological role, catalyzes the reversible formation of acyl-phosphate (acyl-PO(4)) from acyl-[acyl-carrier-protein] (acyl-ACP). This enzyme utilizes acyl-ACP as fatty acyl donor, but not acyl-CoA. The protein is Phosphate acyltransferase of Leptospira interrogans serogroup Icterohaemorrhagiae serovar copenhageni (strain Fiocruz L1-130).